Consider the following 113-residue polypeptide: Colicin-E1 immunity protein (113 aa).

In terms of biological role, this protein is able to protect a cell, which harbors the plasmid ColE1 encoding colicin E1, against colicin E1. In Escherichia coli, this protein is Colicin-E1 immunity protein (imm).